The primary structure comprises 362 residues: C-C chemokine receptor type 10 (362 aa).

The Extracellular segment spans residues 1 to 48 (MGTKPTEQVSWGLYSGYDEEAYSVGPLPELCYKADVQAFSRAFQPSVS). A helical membrane pass occupies residues 49–69 (LMVAVLGLAGNGLVLATHLAA). At 70 to 80 (RRTTRSPTSVH) the chain is on the cytoplasmic side. Residues 81-101 (LLQLALADLLLALTLPFAAAG) form a helical membrane-spanning segment. Residues 102 to 115 (ALQGWNLGSTTCRA) lie on the Extracellular side of the membrane. The cysteines at positions 113 and 191 are disulfide-linked. Residues 116–136 (ISGLYSASFHAGFLFLACISA) traverse the membrane as a helical segment. At 137–159 (DRYVAIARALPAGQRPSTPSRAH) the chain is on the cytoplasmic side. Residues 160–180 (LVSVFVWLLSLFLALPALLFS) traverse the membrane as a helical segment. Residues 181-208 (RDGPREGQRRCRLIFPESLTQTVKGASA) are Extracellular-facing. A helical transmembrane segment spans residues 209-229 (VAQVVLGFALPLGVMAACYAL). Topologically, residues 230 to 247 (LGRTLLAARGPERRRALR) are cytoplasmic. The chain crosses the membrane as a helical span at residues 248–268 (VVVALVVAFVVLQLPYSLALL). At 269–291 (LDTADLLAARERSCSSSKRKDLA) the chain is on the extracellular side. Residues 292 to 312 (LLVTGGLTLVRCSLNPVLYAF) traverse the membrane as a helical segment. Residues 313 to 362 (LGLRFRRDLRRLLQGGGCSPKPNPRGRCPRRLRLSSCSAPTETHSLSWDN) are Cytoplasmic-facing.

Belongs to the G-protein coupled receptor 1 family. As to expression, expressed at high levels in small intestine, colon, lymph nodes, Peyer patches and at lower levels in thymus, lung and spleen.

Its subcellular location is the cell membrane. Its function is as follows. Receptor for chemokines SCYA27 and SCYA28. Subsequently transduces a signal by increasing the intracellular calcium ions level. The protein is C-C chemokine receptor type 10 (Ccr10) of Mus musculus (Mouse).